We begin with the raw amino-acid sequence, 118 residues long: Vitelline membrane protein Vm32E (118 aa).

The N-terminal stretch at 1-17 is a signal peptide; sequence MKIVALTLVAFVALAGA. Residues 36 to 75 enclose the VM domain; it reads GYPAPPCPTNYLFSCQPNLAPAPCAQEAQAPAYGSAGAYT.

Belongs to the vitelline membrane family.

It is found in the secreted. Major early eggshell protein. The sequence is that of Vitelline membrane protein Vm32E from Drosophila simulans (Fruit fly).